The chain runs to 72 residues: DNA-directed RNA polymerase subunit epsilon (72 aa).

The protein belongs to the RNA polymerase subunit epsilon family. RNAP is composed of a core of 2 alpha, a beta and a beta' subunit. The core is associated with a delta subunit, and at least one of epsilon or omega. When a sigma factor is associated with the core the holoenzyme is formed, which can initiate transcription.

It catalyses the reaction RNA(n) + a ribonucleoside 5'-triphosphate = RNA(n+1) + diphosphate. In terms of biological role, a non-essential component of RNA polymerase (RNAP). The polypeptide is DNA-directed RNA polymerase subunit epsilon (Lactiplantibacillus plantarum (strain ATCC BAA-793 / NCIMB 8826 / WCFS1) (Lactobacillus plantarum)).